The chain runs to 664 residues: Translation factor GUF1, mitochondrial (664 aa).

The tr-type G domain maps to 63–246; it reads SNYRNFSIVA…SIINNIPPPQ (184 aa). GTP is bound by residues 72 to 79, 139 to 143, and 193 to 196; these read AHVDHGKS, DTPGH, and NKID.

It belongs to the TRAFAC class translation factor GTPase superfamily. Classic translation factor GTPase family. LepA subfamily.

Its subcellular location is the mitochondrion inner membrane. The catalysed reaction is GTP + H2O = GDP + phosphate + H(+). Functionally, promotes mitochondrial protein synthesis. May act as a fidelity factor of the translation reaction, by catalyzing a one-codon backward translocation of tRNAs on improperly translocated ribosomes. Binds to mitochondrial ribosomes in a GTP-dependent manner. The chain is Translation factor GUF1, mitochondrial from Clavispora lusitaniae (strain ATCC 42720) (Yeast).